Consider the following 235-residue polypeptide: MAIKLENIKIEKSWKEVLKGEFLSPYFLEIKEKLVCLKNSGVTIYPPGNLIFNAFNLTPFDKVKVVILGQDPYHEVNQAMGLSFSVPKDVRIPPSLINIFKEINSDLGINEPNCGDLTFWAKQGVLLLNASLSVSAKIANSHKNFGWQIFTDAVIKTLSQKRENIVFMLWGNFAKAKATLIDAKKHLILTAAHPSPLAGGAFFGCKHFSKCNNFLISRGISPINWDLNYTDNQPF.

The Proton acceptor role is filled by D71.

Belongs to the uracil-DNA glycosylase (UDG) superfamily. UNG family.

It localises to the cytoplasm. It catalyses the reaction Hydrolyzes single-stranded DNA or mismatched double-stranded DNA and polynucleotides, releasing free uracil.. Excises uracil residues from the DNA which can arise as a result of misincorporation of dUMP residues by DNA polymerase or due to deamination of cytosine. This Campylobacter hominis (strain ATCC BAA-381 / DSM 21671 / CCUG 45161 / LMG 19568 / NCTC 13146 / CH001A) protein is Uracil-DNA glycosylase.